The sequence spans 264 residues: 3-deoxy-manno-octulosonate cytidylyltransferase (264 aa).

This sequence belongs to the KdsB family.

It is found in the cytoplasm. It catalyses the reaction 3-deoxy-alpha-D-manno-oct-2-ulosonate + CTP = CMP-3-deoxy-beta-D-manno-octulosonate + diphosphate. The protein operates within nucleotide-sugar biosynthesis; CMP-3-deoxy-D-manno-octulosonate biosynthesis; CMP-3-deoxy-D-manno-octulosonate from 3-deoxy-D-manno-octulosonate and CTP: step 1/1. Its pathway is bacterial outer membrane biogenesis; lipopolysaccharide biosynthesis. In terms of biological role, activates KDO (a required 8-carbon sugar) for incorporation into bacterial lipopolysaccharide in Gram-negative bacteria. The polypeptide is 3-deoxy-manno-octulosonate cytidylyltransferase (Methylibium petroleiphilum (strain ATCC BAA-1232 / LMG 22953 / PM1)).